The chain runs to 419 residues: MIYLDHNATTPVDPRVVEVMLPLFTERFANPASKHAPGQEATRIVERARREVASLAGARPREIVFTSGATEAANLAIGGVLATAEPGRRRILVGATEHPAVLGAADAAVSAGSAVSADGTTAAERIAVHPDGTVDVDDLRRRLGPDVALVAVMAANNETGAVNDPRPLVEAARSAGRCCCADVTQALGRVPVEFERTGVDLAVSSAHKLYGPKGVGALIASKDAWSRLAPRVHGGGQERGLRAGTLNTAGIAGFGAAARIAAESMADDGTRQRALVALLTELLVKRLGPGAVELNGPVRARLPNTVNLRFVGAGADEVQACAPRVAISAGSACSGGGDEPSHVLRAMGRTATEARESLRFSLGRATTTEEIRTAADLVARAVLRVRSLSQSTPIQDEVRDDNRASSNSLNRGSAASKES.

Pyridoxal 5'-phosphate is bound by residues 69-70 (AT), asparagine 157, glutamine 185, and 205-207 (SAH). An N6-(pyridoxal phosphate)lysine modification is found at lysine 208. Threonine 245 is a pyridoxal 5'-phosphate binding site. The active-site Cysteine persulfide intermediate is the cysteine 333. Cysteine 333 is a [2Fe-2S] cluster binding site. The disordered stretch occupies residues 392–419 (TPIQDEVRDDNRASSNSLNRGSAASKES). Polar residues predominate over residues 404-413 (ASSNSLNRGS).

It belongs to the class-V pyridoxal-phosphate-dependent aminotransferase family. NifS/IscS subfamily. As to quaternary structure, homodimer. Pyridoxal 5'-phosphate serves as cofactor.

The enzyme catalyses (sulfur carrier)-H + L-cysteine = (sulfur carrier)-SH + L-alanine. Its function is as follows. Catalyzes the removal of elemental sulfur atoms from cysteine to produce alanine. Seems to participate in the biosynthesis of the nitrogenase metalloclusters by providing the inorganic sulfur required for the Fe-S core formation. In Frankia sp. (strain EuIK1), this protein is Cysteine desulfurase.